Consider the following 374-residue polypeptide: DNA/RNA-binding protein ALBA4 (374 aa).

It belongs to the histone-like Alba family.

It localises to the cytoplasm. Its subcellular location is the cell cortex. It is found in the perinuclear region. Functionally, possesses DNA- and RNA-binding activities. Binds to DNA with relaxed sequence specificity. May associate with the subtelomeric TARE6 repeats. Regulates the abundance of transcript sub-populations in a stage-specific manner. Regulates activation of male gametocytes. Participates in the coordination of sporozoite development in the oocyst. The polypeptide is DNA/RNA-binding protein ALBA4 (Plasmodium yoelii yoelii).